Here is a 1470-residue protein sequence, read N- to C-terminus: Guanine nucleotide exchange factor subunit R06F6.8 (1470 aa).

WD repeat units follow at residues 20-58 (STAADIKSIVANRDRRLIAVATNDAIYIWLANPQLLLCS), 68-107 (ETRGELKEIYWKPDSTSIAVTTNQCKILIYNLDLRDDEQC), and 472-512 (AYCS…VVGV). 4 disordered regions span residues 673–710 (QSQNQDLPWKNHRRNGSNVSIQSVSTSTTSEPSSPMNQ), 975–1001 (FFRTPPPSAKTSLSRRPTVSSPSADSS), 1017–1045 (RLNKVRHSQSTEQKDAPRKDSIGGSSKDK), and 1238–1259 (RSPSTSSSMNHHAPLAPPSPSS). The span at 689 to 707 (SNVSIQSVSTSTTSEPSSP) shows a compositional bias: low complexity. Residues 983–1001 (AKTSLSRRPTVSSPSADSS) are compositionally biased toward polar residues. Positions 1028-1045 (EQKDAPRKDSIGGSSKDK) are enriched in basic and acidic residues. Residues 1294-1314 (LLLSLFSQTATIDWIFLFCLL) form a helical membrane-spanning segment. Over residues 1385–1403 (SPDNENRKASQKTSADDPK) the composition is skewed to basic and acidic residues. Residues 1385 to 1447 (SPDNENRKAS…SADRAHKSVK (63 aa)) form a disordered region. A compositionally biased stretch (polar residues) spans 1411-1424 (SGSSKLNNSFSNPK). The segment covering 1431–1447 (GRRERSRSADRAHKSVK) has biased composition (basic and acidic residues).

The protein belongs to the RIC1 family. In terms of assembly, component of a guanine nucleotide exchange factor (GEF) complex.

The protein resides in the membrane. Functionally, probable component of a guanine nucleotide exchange factor (GEF) that may be required for efficient fusion of endosome-derived vesicles with the Golgi. This chain is Guanine nucleotide exchange factor subunit R06F6.8, found in Caenorhabditis elegans.